The chain runs to 1413 residues: Alpha-latrocrustotoxin-Lt1a (1413 aa).

The propeptide occupies valine 1–arginine 28. Residues alanine 238 to valine 257 are helix H8 is the probable transmembrane region of the tetrameric pore inserted in the target cell membrane. 20 ANK repeats span residues aspartate 457–alanine 490, methionine 494–valine 524, asparagine 528–valine 557, asparagine 562–alanine 592, alanine 596–isoleucine 625, serine 629–leucine 658, asparagine 664–alanine 694, lysine 699–threonine 729, glutamine 733–glutamine 762, asparagine 766–alanine 795, aspartate 799–alanine 828, isoleucine 832–asparagine 861, arginine 866–glutamate 895, aspartate 899–leucine 928, arginine 965–glutamate 995, aspartate 996–alanine 1026, asparagine 1031–lysine 1072, glutamine 1077–lysine 1106, arginine 1109–threonine 1139, and glutamate 1143–alanine 1172. Residues arginine 1193–lysine 1413 constitute a propeptide that is removed on maturation.

It belongs to the cationic peptide 01 (latrotoxin) family. 01 (alpha-latrocrustotoxin) subfamily. Homotetramer in membranes. Expressed by the venom gland.

It localises to the secreted. The protein resides in the target cell membrane. Crustacean-selective presynaptic neurotoxin that induces neurotransmitter exocytosis. May bind to crustacean neurexin-1 homolog, adhesion G protein-coupled receptor L1 homolog, and receptor-type tyrosine-protein phosphatase S homolog, and induces neurotransmitter exocytosis both by forming tetrameric pores in membranes and signaling via G protein-coupled receptor. This recombinant protein form channels in artificial membrane bilayers, that are stabilized by calcium ions and allow calcium flux at negative membrane potentials. The polypeptide is Alpha-latrocrustotoxin-Lt1a (Latrodectus tredecimguttatus (Mediterranean black widow spider)).